A 623-amino-acid polypeptide reads, in one-letter code: Kelch-like protein diablo (623 aa).

The segment at 1–54 (MGDLPGSGSTAQPRDAAVTGTGGNSTAGGGSSVGSTAVDRPPSPARLSHTSEKH) is disordered. Threonine 19 carries the phosphothreonine modification. The span at 20–32 (GTGGNSTAGGGSS) shows a compositional bias: gly residues. The region spanning 72–139 (CDVVLNVGGR…CYTAHIIVEE (68 aa)) is the BTB domain. Residues 174-276 (CLGIRAFADT…SPKFLVGTVG (103 aa)) form the BACK domain. 6 Kelch repeats span residues 323 to 369 (VLFA…VLND), 371 to 417 (LYAV…VLDE), 418 to 464 (FLYA…VLGG), 466 to 511 (LYAI…VFNN), 513 to 558 (IYAV…VVNG), and 559 to 605 (QLYA…VMRA).

It participates in protein modification; protein ubiquitination. Probable substrate-specific adapter of an E3 ubiquitin-protein ligase complex which mediates the ubiquitination and subsequent proteasomal degradation of target proteins. May have a role in synapse differentiation and growth. In Drosophila simulans (Fruit fly), this protein is Kelch-like protein diablo.